The chain runs to 347 residues: 4-hydroxy-3-methylbut-2-en-1-yl diphosphate synthase (flavodoxin) (347 aa).

[4Fe-4S] cluster-binding residues include Cys259, Cys262, Cys294, and Glu301.

This sequence belongs to the IspG family. [4Fe-4S] cluster serves as cofactor.

The enzyme catalyses (2E)-4-hydroxy-3-methylbut-2-enyl diphosphate + oxidized [flavodoxin] + H2O + 2 H(+) = 2-C-methyl-D-erythritol 2,4-cyclic diphosphate + reduced [flavodoxin]. It participates in isoprenoid biosynthesis; isopentenyl diphosphate biosynthesis via DXP pathway; isopentenyl diphosphate from 1-deoxy-D-xylulose 5-phosphate: step 5/6. Its function is as follows. Converts 2C-methyl-D-erythritol 2,4-cyclodiphosphate (ME-2,4cPP) into 1-hydroxy-2-methyl-2-(E)-butenyl 4-diphosphate. The polypeptide is 4-hydroxy-3-methylbut-2-en-1-yl diphosphate synthase (flavodoxin) (Caldicellulosiruptor saccharolyticus (strain ATCC 43494 / DSM 8903 / Tp8T 6331)).